A 330-amino-acid chain; its full sequence is Dimethyladenosine transferase 1, mitochondrial (330 aa).

The transit peptide at 1-84 directs the protein to the mitochondrion; it reads MAQPSARVLQ…RSILRRHPQR (84 aa). S-adenosyl-L-methionine is bound by residues 38–41, Asn-39, Leu-41, Gly-67, Glu-89, Asp-118, and Asn-140; that span reads QNFL.

The protein belongs to the class I-like SAM-binding methyltransferase superfamily. rRNA adenine N(6)-methyltransferase family. KsgA subfamily.

It is found in the mitochondrion. In terms of biological role, probable S-adenosyl-L-methionine-dependent methyltransferase which specifically dimethylates mitochondrial 12S rRNA at the conserved stem loop. In contrast to mtTFB2, it does not have a critical role in either transcription or regulation of the copy number of mitochondrial DNA. This is Dimethyladenosine transferase 1, mitochondrial (mtTFB1) from Drosophila melanogaster (Fruit fly).